A 280-amino-acid polypeptide reads, in one-letter code: DegV domain-containing protein M6_Spy1440 (280 aa).

Residues 3–280 (WKIVTDSGCD…DGGLLMGYEI (278 aa)) form the DegV domain. Ser63 and Ser91 together coordinate hexadecanoate.

Functionally, may bind long-chain fatty acids, such as palmitate, and may play a role in lipid transport or fatty acid metabolism. This is DegV domain-containing protein M6_Spy1440 from Streptococcus pyogenes serotype M6 (strain ATCC BAA-946 / MGAS10394).